The primary structure comprises 264 residues: Apolipoprotein A-I (264 aa).

An N-terminal signal peptide occupies residues 1 to 18 (MKAVVLAVAVLFLTGSQA). Tandem repeats lie at residues 67–88 (LNLLENWDTFGSTFGRLQEQLG) and 89–110 (PVTREFWDSLEKDTDWLRQEMN). Residues 67-264 (LNLLENWDTF…DEATQKLNTQ (198 aa)) are 10 X approximate tandem repeats. The residue at position 109 (Met109) is a Methionine sulfoxide. Residues 111–121 (KDLEEVKQKVQ) form a 3; half-length repeat. Tandem repeats lie at residues 122–143 (PYLDEFQKKWEEEVERYRPKVE), 144–165 (PLGAQLREGARQKLEELQKQLV), and 166–187 (PLGEDLRDRARLHVDALRTKLA). The stretch at 188–207 (PYSDQMRDRLAERLTALRDN) is one 7; truncated repeat. The residue at position 193 (Met193) is a Methionine sulfoxide. Copy 8 of the repeat occupies 208–229 (PKLAEYHARATEHLKKLGEKTK). The stretch at 230–240 (PTLEDLRQGLM) is one 9; half-length repeat. Position 240 is a methionine sulfoxide (Met240). Repeat 10 spans residues 241 to 264 (PWLESLKAKALSVLDEATQKLNTQ).

This sequence belongs to the apolipoprotein A1/A4/E family. In terms of assembly, homodimer. Interacts with APOA1BP and CLU. Component of a sperm activating protein complex (SPAP), consisting of APOA1, an immunoglobulin heavy chain, an immunoglobulin light chain and albumin. Interacts with NDRG1. Interacts with SCGB3A2. Interacts with NAXE and YJEFN3. Glycosylated. In terms of processing, palmitoylated. Post-translationally, phosphorylation sites are present in the extracellular medium.

Its subcellular location is the secreted. In terms of biological role, participates in the reverse transport of cholesterol from tissues to the liver for excretion by promoting cholesterol efflux from tissues and by acting as a cofactor for the lecithin cholesterol acyltransferase (LCAT). As part of the SPAP complex, activates spermatozoa motility. This chain is Apolipoprotein A-I (Apoa1), found in Nannospalax galili (Northern Israeli blind subterranean mole rat).